A 497-amino-acid chain; its full sequence is ATP synthase subunit alpha 2 (497 aa).

167 to 174 (GERATGKT) is a binding site for ATP.

Belongs to the ATPase alpha/beta chains family. As to quaternary structure, F-type ATPases have 2 components, CF(1) - the catalytic core - and CF(0) - the membrane proton channel. CF(1) has five subunits: alpha(3), beta(3), gamma(1), delta(1), epsilon(1). CF(0) has four main subunits: a(1), b(1), b'(1) and c(9-12).

The protein localises to the cell inner membrane. It carries out the reaction ATP + H2O + 4 H(+)(in) = ADP + phosphate + 5 H(+)(out). Produces ATP from ADP in the presence of a proton gradient across the membrane. The alpha chain is a regulatory subunit. This is ATP synthase subunit alpha 2 from Cereibacter sphaeroides (strain ATCC 17023 / DSM 158 / JCM 6121 / CCUG 31486 / LMG 2827 / NBRC 12203 / NCIMB 8253 / ATH 2.4.1.) (Rhodobacter sphaeroides).